The following is a 552-amino-acid chain: Gamma-aminobutyric acid receptor subunit alpha-4 (552 aa).

A signal peptide spans 1–35; that stretch reads MVSVQKVPAIVLCSGVSLALLHVLCLATCLNESPG. Topologically, residues 36–259 are extracellular; it reads QNSKDEKLCP…FHLRRKMGYF (224 aa). N47 is a glycosylation site (N-linked (GlcNAc...) asparagine). R100 provides a ligand contact to 4-aminobutanoate. N-linked (GlcNAc...) asparagine glycosylation is found at N144 and N157. T163 contributes to the 4-aminobutanoate binding site. C172 and C186 form a disulfide bridge. The helical transmembrane segment at 260–280 threads the bilayer; that stretch reads MIQTYIPCIMTVILSQVSFWI. The Cytoplasmic portion of the chain corresponds to 281 to 284; it reads NKES. A helical transmembrane segment spans residues 285–305; that stretch reads VPARTVFGITTVLTMTTLSIS. Residues 306-318 lie on the Extracellular side of the membrane; sequence ARHSLPKVSYATA. A helical membrane pass occupies residues 319 to 341; that stretch reads MDWFIAVCFAFVFSALIEFAAVN. The Cytoplasmic portion of the chain corresponds to 342-515; sequence YFTNIQMQKA…PPPSGSGTSK (174 aa). Disordered stretches follow at residues 353-436, 448-470, and 486-513; these read KKIS…NPFS, ARGLSSAASPSPHGTLQPAPLRS, and TTVNTTGVPGNVSATPPPSAPPPSGSGT. Over residues 403–423 the composition is skewed to polar residues; the sequence is RTEVGNHSSKTTAAQESSETT. Low complexity-rich tracts occupy residues 448-458 and 486-499; these read ARGLSSAASPS and TTVNTTGVPGNVSA. Residues 500 to 509 show a composition bias toward pro residues; sequence TPPPSAPPPS. A helical transmembrane segment spans residues 516–538; sequence IDKYARILFPVTFGAFNMVYWVV. The Extracellular segment spans residues 539–552; sequence YLSKDTMEKSESLM.

This sequence belongs to the ligand-gated ion channel (TC 1.A.9) family. Gamma-aminobutyric acid receptor (TC 1.A.9.5) subfamily. GABRA4 sub-subfamily. As to quaternary structure, heteropentamer, formed by a combination of alpha (GABRA1-6), beta (GABRB1-3), gamma (GABRG1-3), delta (GABRD), epsilon (GABRE), rho (GABRR1-3), pi (GABRP) and theta (GABRQ) chains, each subunit exhibiting distinct physiological and pharmacological properties. In terms of tissue distribution, expressed in the brain.

Its subcellular location is the cell membrane. It localises to the postsynaptic cell membrane. Potentiated by histamine. Its function is as follows. Alpha subunit of the heteropentameric ligand-gated chloride channel gated by gamma-aminobutyric acid (GABA), a major inhibitory neurotransmitter in the brain. GABA-gated chloride channels, also named GABA(A) receptors (GABAAR), consist of five subunits arranged around a central pore and contain GABA active binding site(s) located at the alpha and beta subunit interface(s). Alpha-4/GABRA4 subunit often assembles with delta or gamma-2 subunits, in combination with beta subunits. When activated by GABA, GABAARs selectively allow the flow of chloride anions across the cell membrane down their electrochemical gradient. GABAARs containing alpha-4 are predominantly extrasynaptic, contributing to tonic inhibition in dentate granule cells and thalamic relay neurons. Extrasynaptic alpha-4-containing GABAARs control levels of excitability and network activity. GABAAR containing alpha-4-beta-3-delta subunits can simultaneously bind GABA and histamine where histamine binds at the interface of two neighboring beta subunits, which may be involved in the regulation of sleep and wakefulness. This is Gamma-aminobutyric acid receptor subunit alpha-4 from Rattus norvegicus (Rat).